The primary structure comprises 106 residues: uncharacterized protein (106 aa).

It belongs to the HesB/IscA family.

This is an uncharacterized protein from Sinorhizobium fredii (strain NBRC 101917 / NGR234).